Reading from the N-terminus, the 448-residue chain is Tubulin beta-1 chain (448 aa).

The GTP site is built by Gln-11, Glu-69, Ser-138, Gly-142, Thr-143, Gly-144, Asn-204, and Asn-226. Glu-69 is a Mg(2+) binding site. The disordered stretch occupies residues 428-448 (AGIGDDEEEDEEGVMGEEIDA). Residues 430–448 (IGDDEEEDEEGVMGEEIDA) are compositionally biased toward acidic residues.

The protein belongs to the tubulin family. As to quaternary structure, dimer of alpha and beta chains. A typical microtubule is a hollow water-filled tube with an outer diameter of 25 nm and an inner diameter of 15 nM. Alpha-beta heterodimers associate head-to-tail to form protofilaments running lengthwise along the microtubule wall with the beta-tubulin subunit facing the microtubule plus end conferring a structural polarity. Microtubules usually have 13 protofilaments but different protofilament numbers can be found in some organisms and specialized cells. It depends on Mg(2+) as a cofactor.

The protein resides in the cytoplasm. It is found in the cytoskeleton. Tubulin is the major constituent of microtubules, a cylinder consisting of laterally associated linear protofilaments composed of alpha- and beta-tubulin heterodimers. Microtubules grow by the addition of GTP-tubulin dimers to the microtubule end, where a stabilizing cap forms. Below the cap, tubulin dimers are in GDP-bound state, owing to GTPase activity of alpha-tubulin. The chain is Tubulin beta-1 chain (TUB-1) from Echinococcus multilocularis (Fox tapeworm).